Consider the following 436-residue polypeptide: 3-ketoacyl-CoA thiolase (436 aa).

The active-site Acyl-thioester intermediate is C99. Residues H392 and C422 each act as proton acceptor in the active site.

The protein belongs to the thiolase-like superfamily. Thiolase family. Heterotetramer of two alpha chains (FadJ) and two beta chains (FadI).

The protein localises to the cytoplasm. The catalysed reaction is an acyl-CoA + acetyl-CoA = a 3-oxoacyl-CoA + CoA. The protein operates within lipid metabolism; fatty acid beta-oxidation. In terms of biological role, catalyzes the final step of fatty acid oxidation in which acetyl-CoA is released and the CoA ester of a fatty acid two carbons shorter is formed. In Escherichia coli (strain K12 / MC4100 / BW2952), this protein is 3-ketoacyl-CoA thiolase.